Here is a 595-residue protein sequence, read N- to C-terminus: MVCHVFSSFSSSLIRVLEAPLLLPAASASSSSSSSPASRSGGRRRRAAHVRPSPAIYPGRQELASHSSMLPTDFDIKVLIERHEALTDDVQEMLQHQRRRHQKTASGGRERIATVDHLRRLCMDHYFQDEVDDAMDACLLEELAHGGDLLDATLAFRLMREAGHHVSADEVLGRFTDDNGEFRLDYRKDIRGLLSLQDISHMNIGQEASLCKAKEFSTRNLESAINYLEPNLARYVRQSLDHPYHVSLNQYKARHHLSYLQTLPIRCTAMEELALADFQLNKLLHQMEMQEIKRWWMDLGLAQEIPVARDQVQKWFVWMMTAIQGASLSRCRIELTKIVSFVYIVDDIFDLVGTREELSCFTQAIRMWDLAAADSLPSCMRSCFRALHTVTNDIADMVEREHGVNPINHLKKAWAMLFDGFMTETKWLSAGQVPDSEEYLRNGVVTSGVPLVFVHLLFMLGHDVSQNAAEFVDHIPPVISCPAKILRLWDDLGSAKDEAQEGLDGSYKELYLKENPGLAAGEAEEHVRRLIAGEWEELNRECFSASPSRSSPATTFPAGFTQAALNAARMVGVMYGYDGERRLPVLDDYVRMLLF.

Residues 1 to 46 (MVCHVFSSFSSSLIRVLEAPLLLPAASASSSSSSSPASRSGGRRRR) constitute a chloroplast transit peptide. The span at 27–40 (SASSSSSSSPASRS) shows a compositional bias: low complexity. The segment at 27–54 (SASSSSSSSPASRSGGRRRRAAHVRPSP) is disordered. Positions 309, 346, 350, 487, and 490 each coordinate (2E)-geranyl diphosphate. Residues D346 and D350 each contribute to the Mg(2+) site. The DDXXD motif signature appears at 346 to 350 (DDIFD). Residues D490, S494, and E498 each coordinate Mg(2+).

This sequence belongs to the terpene synthase family. Tpsb subfamily. The cofactor is Mg(2+). Mn(2+) serves as cofactor.

The protein resides in the plastid. Its subcellular location is the chloroplast. It catalyses the reaction (2E)-geranyl diphosphate + H2O = (S)-linalool + diphosphate. It functions in the pathway secondary metabolite biosynthesis; terpenoid biosynthesis. In terms of biological role, involved in monoterpene (C10) biosynthesis. The major product is S-(+)-linalool. Linalool production is induced by jasmonate in response to pathogen attack, it possesses antibacterial activity and is important for resistance to the bacterial blight pathogen Xanthomonas oryzae pv. oryzae (Xoo). Plants over-expressing linalool synthase display enhanced resistance to Xoo. The protein is S-(+)-linalool synthase, chloroplastic of Oryza sativa subsp. japonica (Rice).